Reading from the N-terminus, the 56-residue chain is Large ribosomal subunit protein bL32c (56 aa).

It belongs to the bacterial ribosomal protein bL32 family.

It is found in the plastid. Its subcellular location is the chloroplast. This is Large ribosomal subunit protein bL32c from Tupiella akineta (Green alga).